The primary structure comprises 670 residues: Beta-lactam-inducible penicillin-binding protein (670 aa).

The helical transmembrane segment at 4–24 threads the bilayer; that stretch reads IKIVPLILIVVVVGFGIYFYA. A penicillin-binding residues include serine 25 and serine 405. Catalysis depends on serine 405, which acts as the Acyl-ester intermediate.

The protein belongs to the transpeptidase family.

It is found in the cell membrane. The protein is Beta-lactam-inducible penicillin-binding protein (pbp) of Staphylococcus aureus.